The chain runs to 156 residues: MTEQTVTLQTTVGDITLELYYNHAPKACKNFYELSKRGYYDNTIFHRLIKDFMIQGGDPLGNGRGGESIYGKKFEDEITKELKHTGAGILSMANSGVNSNGSQFFITFGPTPWLDGKHTIFGRVKSGMKVVQKMNAMQTNNDKPIDEIRIIKATAN.

In terms of domain architecture, PPIase cyclophilin-type spans Thr2–Ala155.

It belongs to the cyclophilin-type PPIase family. In terms of assembly, interacts with snwA.

The protein localises to the cytoplasm. It is found in the nucleus. It carries out the reaction [protein]-peptidylproline (omega=180) = [protein]-peptidylproline (omega=0). Its function is as follows. Catalyzes the cis-trans isomerization of proline imidic peptide bonds in oligopeptides. Plays a role in protein folding, transport and assembly. The polypeptide is Peptidyl-prolyl cis-trans isomerase cypE (cypE) (Dictyostelium discoideum (Social amoeba)).